Consider the following 349-residue polypeptide: MATSTTTSLKEFLSVFPQLVADLRALCLEEYQLPACVWDRFESTLNHNTLGGKCNRGLSVIDSVRLLRDGLELSPAEYFDAAVLGWLVELLQATMLVLDDIMDGSPTRRGKPSWYRVPGVGMAAVNDATMLESAIYMLLKKYFAGRAIYLPVVDLFHETALQIELGQAFDMLIANEGTPDLTTFVPATYSQIVTYKTAFYSFYLPVALALHAVDAATPTNLAAARAILVPMGEYFQVQDDYLDCFADPTVLGKVGTDIIEGKCSWLVVQALQRASTDQAQLLAENYGSASGESSVKALYSELDLESVYRTFEEQRVAELRTLITGLDESQGLRKSVFEELLGKIYQRRK.

Residues lysine 53, arginine 56, and glutamine 92 each coordinate isopentenyl diphosphate. 2 residues coordinate Mg(2+): aspartate 99 and aspartate 103. Arginine 108 lines the dimethylallyl diphosphate pocket. Arginine 109 is a binding site for isopentenyl diphosphate. Dimethylallyl diphosphate-binding residues include lysine 196, threonine 197, glutamine 236, lysine 253, and lysine 262.

It belongs to the FPP/GGPP synthase family. It depends on Mg(2+) as a cofactor.

The enzyme catalyses isopentenyl diphosphate + dimethylallyl diphosphate = (2E)-geranyl diphosphate + diphosphate. It carries out the reaction isopentenyl diphosphate + (2E)-geranyl diphosphate = (2E,6E)-farnesyl diphosphate + diphosphate. The protein operates within secondary metabolite biosynthesis; terpenoid biosynthesis. Its function is as follows. Farnesyl pyrophosphate synthase; part of the gene cluster that mediates the biosynthesis of viridicatumtoxin, a tetracycline-like fungal meroterpenoid with a unique, fused spirobicyclic ring system. The first step of the pathway is the production of the malonamoyl-CoA starter unit for the polyketide synthase vrtA. The aldolase vrtJ may be involved in the synthesis of the malonamate substrate for malonamoyl-CoA synthetase vrtB. The polyketide synthase vrtA then may utilize the malonamoyl-CoA starter unit, followed by sequential condensation of eight malonyl-CoA units to form the polyketide backbone. The cyclization of the last ring could be mediated by the lactamase-like protein vrtG. The proposed post-PKS tailoring steps are a hydroxylation at C5 catalyzed the cytochrome P450 monooxygenase vrtE, a hydroxylation at C12a catalyzed by VrtH and/or VrtI, and an O-methylation by the O-methyltransferase vrtF. VrtC is then proposed to catalyze the transfer of a geranyl group synthesized by vrtD to the aromatic C ring of the tetracyclic polyketide intermediate of viridicatumtoxin to yield previridicatumtoxin. Finally, the cytochrome P450 monooxygenase vrtK catalyzes the spirocyclization of the geranyl moiety of previridicatumtoxin to afford viridicatumtoxin. This is Farnesyl pyrophosphate synthase vrtD from Penicillium aethiopicum.